A 537-amino-acid chain; its full sequence is Lariat debranching enzyme (537 aa).

Positions 8, 10, 39, and 84 each coordinate a divalent metal cation. Positions 124-154 (SGIYKGHDFLRGHHEFPPYTESTCRSVYHVR) are lariat recognition loop. 3 residues coordinate a divalent metal cation: His174, His226, and His228. Disordered stretches follow at residues 242-272 (KAPT…SRLP) and 473-537 (TAAE…EDDD). A compositionally biased stretch (low complexity) spans 251–260 (SSSSSSSSSS).

It belongs to the lariat debranching enzyme family. The cofactor is Fe(2+). Zn(2+) serves as cofactor. It depends on Mn(2+) as a cofactor.

It localises to the nucleus. Active in presence of diverse metals including Fe(2+), Zn(2+), Mn(2+). Binds two metal cations in two adjacent alpha and beta metal-binding pockets. Its function is as follows. Cleaves the 2'-5' phosphodiester linkage at the branch point of lariat intron pre-mRNAs after splicing and converts them into linear molecules that are subsequently degraded. It thereby facilitates ribonucleotide turnover. The chain is Lariat debranching enzyme (DBR1) from Drosophila pseudoobscura pseudoobscura (Fruit fly).